The chain runs to 439 residues: Enolase 1 (439 aa).

Substrate contacts are provided by His-160 and Glu-169. The active-site Proton donor is the Glu-212. Residues Asp-247, Glu-296, and Asp-323 each coordinate Mg(2+). Residues Glu-296 and Asp-323 each contribute to the substrate site. Lys-348 (proton acceptor) is an active-site residue. Substrate is bound by residues 375 to 378 and Lys-399; that span reads SHRS.

The protein belongs to the enolase family. In terms of assembly, homodimer. Mg(2+) serves as cofactor.

The protein resides in the cytoplasm. The enzyme catalyses (2R)-2-phosphoglycerate = phosphoenolpyruvate + H2O. It functions in the pathway carbohydrate degradation; glycolysis; pyruvate from D-glyceraldehyde 3-phosphate: step 4/5. The sequence is that of Enolase 1 (ENO1) from Debaryomyces hansenii (strain ATCC 36239 / CBS 767 / BCRC 21394 / JCM 1990 / NBRC 0083 / IGC 2968) (Yeast).